We begin with the raw amino-acid sequence, 739 residues long: BEL1-like homeodomain protein 2 (739 aa).

Disordered regions lie at residues 23-73 (SQDY…ESSV) and 143-222 (LMNP…NSQT). The segment covering 41-58 (NFSNGFDRSDSPNLTTQQ) has biased composition (polar residues). Over residues 145–155 (NPPPPQQPPSP) the composition is skewed to pro residues. A compositionally biased stretch (low complexity) spans 179 to 190 (TNTTHHQNYTNH). Residues 316–332 (SRYTTAAQELLEEFCSV) are SR/KY domain. Positions 341–378 (KLGNSSNPNTCGGDGGGSSPSSAGANKEHPPLSASDRI) are disordered. Positions 376-447 (DRIEHQRRKV…CLKDAVAAQL (72 aa)) are BELL domain. A DNA-binding region (homeobox) is located at residues 498–560 (AWRPQRGLPE…NARVRLWKPM (63 aa)). The disordered stretch occupies residues 567 to 627 (QESKEREREE…TAPDASDADA (61 aa)). Positions 576–585 (EELEENEEDQ) are enriched in acidic residues. Residues 586-596 (ETKNSNDDKST) are compositionally biased toward basic and acidic residues. Low complexity predominate over residues 597-627 (KSNNNESNFTAVRTTSQTPTTTAPDASDADA).

Belongs to the TALE/BELL homeobox family. As to quaternary structure, may form heterodimeric complexes with TALE/KNOX proteins STM, KNAT1/BP, KNAT2 and KNAT5. Interacts with OFP1, OFP2, OFP4 and OFP5. Interacts with KNATM, isoform KNATM-B. In terms of tissue distribution, expressed in lateral organs.

The protein resides in the nucleus. Its function is as follows. Transcription factor that establishes leaf shape by repressing growth in specific subdomains of the leaf. Negatively regulates knox homeobox gene KNAT1/BP expression. In Arabidopsis thaliana (Mouse-ear cress), this protein is BEL1-like homeodomain protein 2 (BLH2).